The following is a 69-amino-acid chain: Large ribosomal subunit protein uL29 (69 aa).

It belongs to the universal ribosomal protein uL29 family.

The chain is Large ribosomal subunit protein uL29 from Thermoanaerobacter pseudethanolicus (strain ATCC 33223 / 39E) (Clostridium thermohydrosulfuricum).